We begin with the raw amino-acid sequence, 224 residues long: Pre-hexon-linking protein VIII (224 aa).

Thr-64 bears the Phosphothreonine; by host mark. Residues 112-154 constitute a propeptide that is removed on maturation; sequence RQPSPSHIDIKDTMLAGTGIQLGEDIPSVSWIRPDGIFQLGGG.

The protein belongs to the adenoviridae hexon-linking protein family. In terms of assembly, interacts with the peripentonal hexons as well as the hexons in the facets. Part of a complex composed of the core-capsid bridging protein, the endosome lysis protein VI and the hexon-linking protein VIII; these interactions bridge the virus core to the capsid. In terms of processing, cleaved by the viral protease during virion maturation. May cause the middle segment to be shed from the capsid.

It localises to the virion. Its subcellular location is the host nucleus. Functionally, structural component of the virion that acts as a cement protein on the capsid interior and which glue the peripentonal hexons and group-of-nine hexons together. The chain is Pre-hexon-linking protein VIII from Canine adenovirus serotype 1 (strain CLL) (CAdV-1).